The primary structure comprises 235 residues: MLNITPIPALSDNYIWAIQKDNDVIIVDPSDAVPVLAFIAKNQLNLTAILLTHNHHDHTDGMPELLSRYPQLSVYGPQEVAQFANRIVQPEDHLTLFDYDVRVIESAGHTAQHVSYLFGNEYLFCGDALFSGGCGRVFTGNYQAQFDALQRFKALPEFVEIFPAHEYTLSNLKFAEAVLAPSCALFEIQERAEILRSRNQPTLPTTLERELQINPFLQAVDLDQFIALRHQKDNF.

Positions 53, 55, 57, 58, 109, 127, and 165 each coordinate Zn(2+).

The protein belongs to the metallo-beta-lactamase superfamily. Glyoxalase II family. Monomer. The cofactor is Zn(2+).

The enzyme catalyses an S-(2-hydroxyacyl)glutathione + H2O = a 2-hydroxy carboxylate + glutathione + H(+). The protein operates within secondary metabolite metabolism; methylglyoxal degradation; (R)-lactate from methylglyoxal: step 2/2. In terms of biological role, thiolesterase that catalyzes the hydrolysis of S-D-lactoyl-glutathione to form glutathione and D-lactic acid. The protein is Hydroxyacylglutathione hydrolase of Actinobacillus pleuropneumoniae serotype 5b (strain L20).